A 316-amino-acid polypeptide reads, in one-letter code: 4-hydroxy-3-methylbut-2-enyl diphosphate reductase (316 aa).

Residue Cys12 coordinates [4Fe-4S] cluster. (2E)-4-hydroxy-3-methylbut-2-enyl diphosphate-binding residues include His43 and His81. Positions 43 and 81 each coordinate dimethylallyl diphosphate. Positions 43 and 81 each coordinate isopentenyl diphosphate. A [4Fe-4S] cluster-binding site is contributed by Cys103. Residue His131 participates in (2E)-4-hydroxy-3-methylbut-2-enyl diphosphate binding. His131 contacts dimethylallyl diphosphate. An isopentenyl diphosphate-binding site is contributed by His131. Glu133 functions as the Proton donor in the catalytic mechanism. Thr170 contacts (2E)-4-hydroxy-3-methylbut-2-enyl diphosphate. Position 198 (Cys198) interacts with [4Fe-4S] cluster. Residues Ser226, Asn228, and Ser271 each coordinate (2E)-4-hydroxy-3-methylbut-2-enyl diphosphate. 3 residues coordinate dimethylallyl diphosphate: Ser226, Asn228, and Ser271. Isopentenyl diphosphate contacts are provided by Ser226, Asn228, and Ser271.

This sequence belongs to the IspH family. It depends on [4Fe-4S] cluster as a cofactor.

The enzyme catalyses isopentenyl diphosphate + 2 oxidized [2Fe-2S]-[ferredoxin] + H2O = (2E)-4-hydroxy-3-methylbut-2-enyl diphosphate + 2 reduced [2Fe-2S]-[ferredoxin] + 2 H(+). It catalyses the reaction dimethylallyl diphosphate + 2 oxidized [2Fe-2S]-[ferredoxin] + H2O = (2E)-4-hydroxy-3-methylbut-2-enyl diphosphate + 2 reduced [2Fe-2S]-[ferredoxin] + 2 H(+). It participates in isoprenoid biosynthesis; dimethylallyl diphosphate biosynthesis; dimethylallyl diphosphate from (2E)-4-hydroxy-3-methylbutenyl diphosphate: step 1/1. The protein operates within isoprenoid biosynthesis; isopentenyl diphosphate biosynthesis via DXP pathway; isopentenyl diphosphate from 1-deoxy-D-xylulose 5-phosphate: step 6/6. Functionally, catalyzes the conversion of 1-hydroxy-2-methyl-2-(E)-butenyl 4-diphosphate (HMBPP) into a mixture of isopentenyl diphosphate (IPP) and dimethylallyl diphosphate (DMAPP). Acts in the terminal step of the DOXP/MEP pathway for isoprenoid precursor biosynthesis. The sequence is that of 4-hydroxy-3-methylbut-2-enyl diphosphate reductase from Geobacillus thermodenitrificans (strain NG80-2).